A 481-amino-acid polypeptide reads, in one-letter code: Aspartyl/glutamyl-tRNA(Asn/Gln) amidotransferase subunit B (481 aa).

Belongs to the GatB/GatE family. GatB subfamily. As to quaternary structure, heterotrimer of A, B and C subunits.

It catalyses the reaction L-glutamyl-tRNA(Gln) + L-glutamine + ATP + H2O = L-glutaminyl-tRNA(Gln) + L-glutamate + ADP + phosphate + H(+). The enzyme catalyses L-aspartyl-tRNA(Asn) + L-glutamine + ATP + H2O = L-asparaginyl-tRNA(Asn) + L-glutamate + ADP + phosphate + 2 H(+). Allows the formation of correctly charged Asn-tRNA(Asn) or Gln-tRNA(Gln) through the transamidation of misacylated Asp-tRNA(Asn) or Glu-tRNA(Gln) in organisms which lack either or both of asparaginyl-tRNA or glutaminyl-tRNA synthetases. The reaction takes place in the presence of glutamine and ATP through an activated phospho-Asp-tRNA(Asn) or phospho-Glu-tRNA(Gln). The sequence is that of Aspartyl/glutamyl-tRNA(Asn/Gln) amidotransferase subunit B from Carboxydothermus hydrogenoformans (strain ATCC BAA-161 / DSM 6008 / Z-2901).